A 638-amino-acid chain; its full sequence is LIM domain kinase 2 (638 aa).

2 consecutive LIM zinc-binding domains span residues 12–63 and 72–124; these read CPGC…CPKD and CHGC…CGKC. One can recognise a PDZ domain in the interval 152–239; sequence LISMPATTEG…TLQLLIEHDP (88 aa). Threonine 210 carries the phosphothreonine modification. Residues 279–304 form a disordered region; it reads LRRRSLRRSNSISKSPGPSSPKEPLL. Residues 286 to 302 show a composition bias toward low complexity; the sequence is RSNSISKSPGPSSPKEP. Serine 293 and serine 298 each carry phosphoserine. A Protein kinase domain is found at 331-608; sequence LIHGEVLGKG…DSFEALSLYL (278 aa). ATP is bound by residues 337–345 and lysine 360; that span reads LGKGFFGQA. Residue aspartate 451 is part of the active site. Threonine 505 bears the Phosphothreonine; by ROCK1 and CDC42BP mark.

The protein belongs to the protein kinase superfamily. TKL Ser/Thr protein kinase family. In terms of assembly, interacts with LIMK2b. Interacts with LIMK2a. As to quaternary structure, binds ROCK1 and MARF1. Interacts with NISCH. In terms of processing, phosphorylated on serine and/or threonine residues by ROCK1.

It is found in the cytoplasm. The protein resides in the cytoskeleton. Its subcellular location is the spindle. The protein localises to the microtubule organizing center. It localises to the centrosome. It is found in the nucleus. The protein resides in the perinuclear region. The catalysed reaction is L-seryl-[protein] + ATP = O-phospho-L-seryl-[protein] + ADP + H(+). The enzyme catalyses L-threonyl-[protein] + ATP = O-phospho-L-threonyl-[protein] + ADP + H(+). Functionally, serine/threonine-protein kinase that plays an essential role in the regulation of actin filament dynamics. Acts downstream of several Rho family GTPase signal transduction pathways. Involved in astral microtubule organization and mitotic spindle orientation during early stages of mitosis by mediating phosphorylation of TPPP. Displays serine/threonine-specific phosphorylation of myelin basic protein and histone (MBP) in vitro. Suppresses ciliogenesis via multiple pathways; phosphorylation of CFL1, suppression of directional trafficking of ciliary vesicles to the ciliary base, and by facilitating YAP1 nuclear localization where it acts as a transcriptional corepressor of the TEAD4 target genes AURKA and PLK1. The chain is LIM domain kinase 2 (LIMK2) from Homo sapiens (Human).